Consider the following 127-residue polypeptide: Fluoride-specific ion channel FluC (127 aa).

The next 4 helical transmembrane spans lie at 1–21, 32–52, 71–91, and 96–116; these read MMSY…RHMV, EFPF…GAVV, TGIL…VLLY, and VFLA…ALLL. Na(+) is bound by residues Gly75 and Thr78.

The protein belongs to the fluoride channel Fluc/FEX (TC 1.A.43) family.

It is found in the cell inner membrane. The enzyme catalyses fluoride(in) = fluoride(out). Its activity is regulated as follows. Na(+) is not transported, but it plays an essential structural role and its presence is essential for fluoride channel function. Its function is as follows. Fluoride-specific ion channel. Important for reducing fluoride concentration in the cell, thus reducing its toxicity. This chain is Fluoride-specific ion channel FluC, found in Granulibacter bethesdensis (strain ATCC BAA-1260 / CGDNIH1).